We begin with the raw amino-acid sequence, 154 residues long: Ribosomal RNA large subunit methyltransferase H (154 aa).

Gly103 is a binding site for S-adenosyl-L-methionine.

It belongs to the RNA methyltransferase RlmH family. As to quaternary structure, homodimer.

The protein resides in the cytoplasm. The catalysed reaction is pseudouridine(1915) in 23S rRNA + S-adenosyl-L-methionine = N(3)-methylpseudouridine(1915) in 23S rRNA + S-adenosyl-L-homocysteine + H(+). Its function is as follows. Specifically methylates the pseudouridine at position 1915 (m3Psi1915) in 23S rRNA. This chain is Ribosomal RNA large subunit methyltransferase H, found in Gemmatimonas aurantiaca (strain DSM 14586 / JCM 11422 / NBRC 100505 / T-27).